Here is an 89-residue protein sequence, read N- to C-terminus: Acyl carrier protein MbtL (89 aa).

Residues Asn8–Pro83 form the Carrier domain. An O-(pantetheine 4'-phosphoryl)serine modification is found at Ser43.

In terms of processing, 4'-phosphopantetheine is transferred from CoA to a specific serine of apo-ACP, leading to the activated holo-ACP form.

The protein localises to the cytoplasm. Its pathway is siderophore biosynthesis; mycobactin biosynthesis. Its function is as follows. Acyl carrier protein involved in the formation of acyl-S-ACP intermediates within the mycobactin biosynthesis process. This chain is Acyl carrier protein MbtL (mbtL), found in Mycolicibacterium paratuberculosis (strain ATCC BAA-968 / K-10) (Mycobacterium paratuberculosis).